The chain runs to 83 residues: Small ribosomal subunit protein uS15c (83 aa).

Belongs to the universal ribosomal protein uS15 family. Part of the 30S ribosomal subunit.

The protein resides in the plastid. The protein localises to the chloroplast. The polypeptide is Small ribosomal subunit protein uS15c (rps15) (Fagopyrum esculentum subsp. ancestrale (Wild buckwheat)).